The chain runs to 307 residues: UDP-3-O-acyl-N-acetylglucosamine deacetylase (307 aa).

Zn(2+) contacts are provided by histidine 78, histidine 241, and aspartate 245. Catalysis depends on histidine 268, which acts as the Proton donor.

The protein belongs to the LpxC family. The cofactor is Zn(2+).

The catalysed reaction is a UDP-3-O-[(3R)-3-hydroxyacyl]-N-acetyl-alpha-D-glucosamine + H2O = a UDP-3-O-[(3R)-3-hydroxyacyl]-alpha-D-glucosamine + acetate. It functions in the pathway glycolipid biosynthesis; lipid IV(A) biosynthesis; lipid IV(A) from (3R)-3-hydroxytetradecanoyl-[acyl-carrier-protein] and UDP-N-acetyl-alpha-D-glucosamine: step 2/6. Its function is as follows. Catalyzes the hydrolysis of UDP-3-O-myristoyl-N-acetylglucosamine to form UDP-3-O-myristoylglucosamine and acetate, the committed step in lipid A biosynthesis. This Bordetella avium (strain 197N) protein is UDP-3-O-acyl-N-acetylglucosamine deacetylase.